A 576-amino-acid polypeptide reads, in one-letter code: MAEFPDDQAARLCDNCKKEIPVFNFTIHEIHCQRNIGVCPVCKEPFPKSDMDIHVATEHCQVTCKCNKKLEKRQLKQHVETECPLRLAVCQHCDLELSVVKLKEHEDYCGARTELCGSCGRNVLVKELQTHPAVCGRVEEEKRSEAAVPPEAYDEPWSQDRIWIASQLLRQIEALDPPMRLPGRPLRAFEADPFYSRTASQRGVTAHFPIQNNLFEEQERQERNRSHQSPKDSAENSAHLDFMLALSLQNEGQASSMVEQGFWESVPEADPARAGPTSLGDIKGAADETLLPCEFCEELYPEELLIDHQTSCNPSHALRSLNTGSSSIRGVEDPGAIFQNFLQQATSNQLDTLMGLSSSAAVEDSIIIPCEFCGVQLEEEVLFHHQDQCDQRPATANHRAMEGIPTQDSQPEDRSPELSRRRVKHQGDLSSGYMDDVKQESVKGSTYSLSPNRTMNNVSTCNRLLNSSGPRSDCQRSPPGVLKLNNSGSQDIRGRIRGSQNGPIASAHAPVIHSIRNLYPENLAPSFPHGSPGRFGASEGSRSSRVTPTAASYHSRAAKAKPPKQQGAGDAEEEEE.

N-acetylalanine is present on Ala-2. The TRAF-type zinc-finger motif lies at 27–103 (IHEIHCQRNI…DLELSVVKLK (77 aa)). Ser-278, Ser-320, Ser-326, Ser-327, Ser-409, Ser-415, Ser-430, and Ser-450 each carry phosphoserine. The interval 402–432 (EGIPTQDSQPEDRSPELSRRRVKHQGDLSSG) is disordered. Over residues 411–420 (PEDRSPELSR) the composition is skewed to basic and acidic residues. Disordered regions lie at residues 465 to 491 (LNSSGPRSDCQRSPPGVLKLNNSGSQD) and 529 to 576 (HGSP…EEEE). Ser-531 carries the phosphoserine modification. A compositionally biased stretch (polar residues) spans 540 to 552 (GSRSSRVTPTAAS).

In terms of assembly, interacts with MAVS, TICAM1, TRAF1, TRAF2, TRAF3 and TRAF6. Expressed in vascular smooth muscle cells.

Negative feedback regulator that controls excessive innate immune responses. Regulates both Toll-like receptor 4 (TLR4) and DDX58/RIG1-like helicases (RLH) pathways. May inhibit the LTR pathway by direct interaction with TRAF6 and attenuation of NF-kappa-B activation. May negatively regulate the RLH pathway downstream from MAVS and upstream of NF-kappa-B and IRF3. The polypeptide is TRAF-type zinc finger domain-containing protein 1 (Trafd1) (Rattus norvegicus (Rat)).